The chain runs to 36 residues: Photosystem I reaction center subunit VIII (36 aa).

The chain crosses the membrane as a helical span at residues 7-29 (PSIFVPLVGLVFPAITMASLFIY).

It belongs to the PsaI family.

It is found in the plastid. The protein localises to the chloroplast thylakoid membrane. Functionally, may help in the organization of the PsaL subunit. This Psilotum nudum (Whisk fern) protein is Photosystem I reaction center subunit VIII.